The sequence spans 272 residues: Imidazole glycerol phosphate synthase subunit HisF (272 aa).

Catalysis depends on residues D11 and D130.

The protein belongs to the HisA/HisF family. In terms of assembly, heterodimer of HisH and HisF.

It is found in the cytoplasm. The enzyme catalyses 5-[(5-phospho-1-deoxy-D-ribulos-1-ylimino)methylamino]-1-(5-phospho-beta-D-ribosyl)imidazole-4-carboxamide + L-glutamine = D-erythro-1-(imidazol-4-yl)glycerol 3-phosphate + 5-amino-1-(5-phospho-beta-D-ribosyl)imidazole-4-carboxamide + L-glutamate + H(+). It functions in the pathway amino-acid biosynthesis; L-histidine biosynthesis; L-histidine from 5-phospho-alpha-D-ribose 1-diphosphate: step 5/9. In terms of biological role, IGPS catalyzes the conversion of PRFAR and glutamine to IGP, AICAR and glutamate. The HisF subunit catalyzes the cyclization activity that produces IGP and AICAR from PRFAR using the ammonia provided by the HisH subunit. This chain is Imidazole glycerol phosphate synthase subunit HisF, found in Methanococcus maripaludis (strain DSM 14266 / JCM 13030 / NBRC 101832 / S2 / LL).